We begin with the raw amino-acid sequence, 252 residues long: Small ribosomal subunit protein uS3 (252 aa).

A KH type-2 domain is found at 39–110; that stretch reads IRKALMKELK…EVKINVVEIK (72 aa). The tract at residues 218 to 252 is disordered; the sequence is TSDEKPKFEKRDFNRSNNNRRDQAPKSHPVAKEAK. Residues 219-252 are compositionally biased toward basic and acidic residues; sequence SDEKPKFEKRDFNRSNNNRRDQAPKSHPVAKEAK.

The protein belongs to the universal ribosomal protein uS3 family. Part of the 30S ribosomal subunit. Forms a tight complex with proteins S10 and S14.

Functionally, binds the lower part of the 30S subunit head. Binds mRNA in the 70S ribosome, positioning it for translation. The polypeptide is Small ribosomal subunit protein uS3 (Spiroplasma citri).